The following is a 622-amino-acid chain: Chaperone protein HtpG (622 aa).

Residues 1–334 (MKGQETRGFQ…SNDLPLNVSR (334 aa)) form an a; substrate-binding region. A b region spans residues 335-550 (EILQDSRITQ…ADEMSTQMAK (216 aa)). Positions 551–622 (LFAAAGQQAP…IRRMNQLLTA (72 aa)) are c.

This sequence belongs to the heat shock protein 90 family. In terms of assembly, homodimer.

It localises to the cytoplasm. Its function is as follows. Molecular chaperone. Has ATPase activity. This Yersinia pestis protein is Chaperone protein HtpG.